A 198-amino-acid chain; its full sequence is FMN-dependent NADH:quinone oxidoreductase (198 aa).

FMN is bound by residues 92 to 95 (MWNL) and 136 to 139 (SRGG).

The protein belongs to the azoreductase type 1 family. As to quaternary structure, homodimer. Requires FMN as cofactor.

The catalysed reaction is 2 a quinone + NADH + H(+) = 2 a 1,4-benzosemiquinone + NAD(+). It carries out the reaction N,N-dimethyl-1,4-phenylenediamine + anthranilate + 2 NAD(+) = 2-(4-dimethylaminophenyl)diazenylbenzoate + 2 NADH + 2 H(+). Functionally, quinone reductase that provides resistance to thiol-specific stress caused by electrophilic quinones. Its function is as follows. Also exhibits azoreductase activity. Catalyzes the reductive cleavage of the azo bond in aromatic azo compounds to the corresponding amines. This Clostridium perfringens (strain SM101 / Type A) protein is FMN-dependent NADH:quinone oxidoreductase.